We begin with the raw amino-acid sequence, 337 residues long: MKKFIFFFKNYCYISGSMLLFSLIDLLLWIISLYCVGLVFWILFALQCVYFVWWLWKNIFYQLNAFRLVNFVWDNPLSVIIGKLGTGKTLLLTYLSQTMKLLTDEIYSNYPLEDDKVKVLTFKNLDFTDRTKPVPPDDSVILFDESYLYIDGTSPHDEKKVHSGKIPWIVLARHFRHRALFTAQREGMIWNNIRQLASGIIIPISLKKPVAKKGFNFFNRFFIMRMGIFQDITDYEIWKTKSVERTAEGKRAKHKSDVGLGIRFFKIIIPLEFANKYDSEWLKFVRDLKNDEIVNEKFYYWSEITKLSVKERLELFDIDILKKNLKPRKEKGNGKDD.

The next 2 membrane-spanning stretches (helical) occupy residues 4-24 and 26-46; these read FIFF…FSLI and LLLW…LFAL.

The protein belongs to the plectrovirus ORF2 family.

The protein resides in the host membrane. This is an uncharacterized protein from Spiroplasma melliferum (SpV1).